The following is a 302-amino-acid chain: Rhomboid-related protein 2 (302 aa).

Residues 1–38 (MAVAHEMEMESVNLNMEREGKEEPEEEKMKGNGEGKDF) form a disordered region. Residues 16–38 (MEREGKEEPEEEKMKGNGEGKDF) show a composition bias toward basic and acidic residues. Helical transmembrane passes span 71-91 (PLFI…YAVW), 127-147 (LVHA…VLGI), 158-178 (VGLV…IFDP), 182-202 (LVGA…NVIV), 211-231 (FGIV…GFAL), 244-264 (VSFA…YTVF), and 277-297 (FWIA…FNIF). Catalysis depends on serine 186, which acts as the Nucleophile. Residue histidine 249 is part of the active site.

The protein belongs to the peptidase S54 family. Post-translationally, proteolytic processing of the proenzyme produces an N- and a C-terminal fragment. The processing is required for activation of the protease.

Its subcellular location is the cell membrane. It catalyses the reaction Cleaves type-1 transmembrane domains using a catalytic dyad composed of serine and histidine that are contributed by different transmembrane domains.. Involved in regulated intramembrane proteolysis and the subsequent release of functional polypeptides from their membrane anchors. Known substrate: EFNB3. This Mus musculus (Mouse) protein is Rhomboid-related protein 2 (Rhbdl2).